Reading from the N-terminus, the 224-residue chain is MAEKEEDVKLLGFWASPFTRRVEMAFKLKGVPYEYLEQDIVNKSPLLLQINPVYKKVPVLVYKGKILSESHVILEYIDQIWKNNPILPQDPYEKAMALFWAKFVDEQVGPVAFMSVAKAEKGVEVAIKEAQELFMFLEKEVTGKDFFGGKTIGFLDLVAGSMIPFCLARGWEGMGIDMIPEEKFPELNRWIKNLKEIEIVRECIPPREEQIEHMKKVVERIKSA.

Residues Glu-6–Pro-85 form the GST N-terminal domain. Residues Ser-16 to Pro-17, Asn-42 to Lys-43, Lys-56 to Val-57, and Glu-69 to Ser-70 each bind glutathione. Residues Asp-90–Val-217 enclose the GST C-terminal domain. Phosphothreonine is present on Thr-151.

Belongs to the GST superfamily. Tau family.

Its subcellular location is the cytoplasm. The protein resides in the cytosol. The catalysed reaction is RX + glutathione = an S-substituted glutathione + a halide anion + H(+). May be involved in the conjugation of reduced glutathione to a wide number of exogenous and endogenous hydrophobic electrophiles and have a detoxification role against certain herbicides. This is Glutathione S-transferase U4 (GSTU4) from Arabidopsis thaliana (Mouse-ear cress).